Here is a 172-residue protein sequence, read N- to C-terminus: MATPAYMSITGTKQGLITAGAFTEDSVGNTYQEGHEDQVMVQGFNHEVIIPRDPQSGQPTGQRVHKPVVITKVFDKASPLLLAALTSGERLTKVEIQWYRTSAAGTQEHYYTTVLEDAIIVDIKDYMHNCQDPGNAHFTHLEDVHFTYRKITWTHEVSGTSGSDDWRSPVAG.

The protein belongs to the hcp1 family.

It localises to the secreted. The polypeptide is Major exported protein (hcpA) (Pseudomonas aeruginosa (strain ATCC 15692 / DSM 22644 / CIP 104116 / JCM 14847 / LMG 12228 / 1C / PRS 101 / PAO1)).